Reading from the N-terminus, the 159-residue chain is uncharacterized protein (159 aa).

Helical transmembrane passes span 5-27 (TLDLILGIIMGIVTVRATMRGFV), 34-51 (ASILCAAVVAILCHKRLV), 61-83 (SILLPCITFLITFMGVYCVMLFL), and 103-125 (FGFFFGIIEGSVLLTVILLLLHV).

It localises to the cell membrane. This is an uncharacterized protein from Treponema pallidum (strain Nichols).